The chain runs to 365 residues: Synapse-associated protein 1 (365 aa).

The tract at residues 1–65 (MFGGLSSWLG…QPPTEDPQFL (65 aa)) is disordered. A compositionally biased stretch (low complexity) spans 52-62 (EQQQQPPTEDP). Residues 172-224 (VQFNFDFDQMYPVALVMLQEDELLSKMRFALVPKLVKEEVFWRNYFYRISLIK) form the BSD domain. A disordered region spans residues 237–259 (QASGKEEKSSNRDDNLPLTEAVR). Basic and acidic residues predominate over residues 240–251 (GKEEKSSNRDDN). The residue at position 262 (T262) is a Phosphothreonine. Residues S283, S298, and S327 each carry the phosphoserine modification. The segment at 344–365 (VAESEKRDENWDKEIEKMLQES) is disordered. Positions 346 to 365 (ESEKRDENWDKEIEKMLQES) are enriched in basic and acidic residues.

In terms of assembly, interacts (via phosphorylated form and BSD domain) with AKT1; this interaction is enhanced in a mTORC2-mediated manner in response to epidermal growth factor (EGF) stimulation and activates AKT1. Post-translationally, phosphorylated. Phosphorylation increases in a mTORC2-mediated manner in response to epidermal growth factor (EGF) stimulation. Expressed in the liver, kidney, skeletal muscle and in white and brown adipose tissues. Expressed in the cortex, cerebellum, thalamus, hippocampus, braistem, olfactory bulb, spinal cord and striatum of the brain. Expressed in most neuropil regions containing glutamatergic synaptic terminals. Expressed in the CA1, CA2 and CA3 perikarya of the hippocampus. Expressed in neurons and Purkinje cells (at the protein level).

The protein localises to the cytoplasm. It is found in the perinuclear region. It localises to the golgi apparatus. The protein resides in the perikaryon. Its subcellular location is the cell projection. The protein localises to the axon. It is found in the dendrite. It localises to the growth cone. The protein resides in the presynaptic cell membrane. Its subcellular location is the postsynaptic cell membrane. The protein localises to the membrane. Functionally, plays a role in adipocyte differentiation by promoting mTORC2-mediated phosphorylation of AKT1 at 'Ser-473' after growth factor stimulation. The protein is Synapse-associated protein 1 of Mus musculus (Mouse).